A 519-amino-acid chain; its full sequence is Lysine histidine transporter-like 8 (519 aa).

The disordered stretch occupies residues 1 to 44 (MDERPETELISIPATPRVSTPEILTPSGQRSPRPATKPSSATWT). Over 1–114 (MDERPETELI…NLNAGVGFQA (114 aa)) the chain is Cytoplasmic. Transmembrane regions (helical) follow at residues 115–135 (LVLP…SLTI) and 136–156 (AYCW…AVPG). The Cytoplasmic segment spans residues 157–176 (KRYNRYVELAQAAFGERLGV). The chain crosses the membrane as a helical span at residues 177 to 197 (WLALFPTVYLSAGTATALILI). Over 198 to 217 (GGETMKLFFQIVCGPLCTSN) the chain is Extracellular. A helical transmembrane segment spans residues 218 to 238 (PLTTVEWYLVFTSLCIVLSQL). The Cytoplasmic portion of the chain corresponds to 239–243 (PNLNS). The chain crosses the membrane as a helical span at residues 244 to 264 (IAGLSLIGAVTAITYSTMVWV). Topologically, residues 265 to 282 (LSVSQPRPATISYEPLSM) are extracellular. Residues 283–303 (PSTSGSLFAVLNALGIIAFAF) form a helical membrane-spanning segment. The Cytoplasmic portion of the chain corresponds to 304–333 (RGHNLVLEIQSTMPSTFKHPAHVPMWRGAK). Residues 334–354 (ISYFLIALCIFPISIGGFWAY) form a helical membrane-spanning segment. Residues 355–377 (GNLMPSGGMLAALYAFHIHDIPR) lie on the Extracellular side of the membrane. Residues 378–398 (GLLATAFLLVVFSCLSSFQIY) form a helical membrane-spanning segment. The Cytoplasmic segment spans residues 399–427 (SMPAFDSFEAGYTSRTNKPCSIWVRSGFR). A helical transmembrane segment spans residues 428–448 (VFFGFVSFFIGVALPFLSSLA). Position 449 (G449) is a topological domain, extracellular. The chain crosses the membrane as a helical span at residues 450–470 (LLGGLTLPVTFAYPCFMWVLI). Residues 471–485 (KKPAKYSFNWYFHWG) lie on the Cytoplasmic side of the membrane. Residues 486–506 (LGWLGVAFSLAFSIGGIWSMV) form a helical membrane-spanning segment. Residues 507–519 (TNGLKLKFFKPPN) lie on the Extracellular side of the membrane.

The protein belongs to the amino acid/polyamine transporter 2 family. Amino acid/auxin permease (AAAP) (TC 2.A.18.2) subfamily.

It localises to the cell membrane. Amino acid transporter. This chain is Lysine histidine transporter-like 8 (AATL1), found in Arabidopsis thaliana (Mouse-ear cress).